A 517-amino-acid chain; its full sequence is Serine O-succinyltransferase (517 aa).

The N-terminal 46 residues, 1–46, are a transit peptide targeting the mitochondrion; sequence MSPLNGVARSLPRPFQAVARRPFRVAQPAVACPSNRRSFNHSRSLR. The interval 34-66 is disordered; that stretch reads SNRRSFNHSRSLRSTGSQSPAPSPRDSSNPALS. Over residues 45–64 the composition is skewed to polar residues; it reads LRSTGSQSPAPSPRDSSNPA. An AB hydrolase-1 domain is found at 134–386; that stretch reads NVILLHTGLS…LTQQLATKKQ (253 aa). The important for substrate specificity stretch occupies residues 141 to 144; it reads GLSA. The active-site Nucleophile is the Ser238. Arg307 serves as a coordination point for substrate. The interval 413–436 is disordered; that stretch reads QPYQEQPSASTSAEQSASASETGS. The segment covering 416–436 has biased composition (low complexity); sequence QEQPSASTSAEQSASASETGS. Residues Asp461 and His498 contribute to the active site. Asp499 is a binding site for substrate.

This sequence belongs to the AB hydrolase superfamily. MetX family.

It is found in the mitochondrion. It catalyses the reaction succinyl-CoA + L-serine = O-succinyl-L-serine + CoA. It functions in the pathway amino-acid biosynthesis; L-cysteine biosynthesis; L-cysteine from L-serine: step 1/2. Transfers a succinyl group from succinyl-CoA to L-serine, forming succinyl-L-serine. Also has weak serine acetyl transferase activity and homoserine succinyl transferase activity. This is Serine O-succinyltransferase from Emericella nidulans (Aspergillus nidulans).